The sequence spans 538 residues: MEESVNQMQPLNEKQIANSQDGYVWQVTDMNRLHRFLCFGSEGGTYYIKEQKLGLENAEALIRLIEDGRGCEVIQEIKSFSQEGRTTKQEPMLFALAICSQCSDISTKQAAFKAVSEVCRIPTHLFTFIQFKKDLKESMKCGMWGRALRKAIADWYNEKGGMALALAVTKYKQRNGWSHKDLLRLSHLKPSSEGLAIVTKYITKGWKEVHELYKEKALSVETEKLLKYLEAVEKVKRTRDELEVIHLIEEHRLVREHLLTNHLKSKEVWKALLQEMPLTALLRNLGKMTANSVLEPGNSEVSLVCEKLCNEKLLKKARIHPFHILIALETYKTGHGLRGKLKWRPDEEILKALDAAFYKTFKTVEPTGKRFLLAVDVSASMNQRVLGSILNASTVAAAMCMVVTRTEKDSYVVAFSDEMVPCPVTTDMTLQQVLMAMSQIPAGGTDCSLPMIWAQKTNTPADVFIVFTDNETFAGGVHPAIALREYRKKMDIPAKLIVCGMTSNGFTIADPDDRGMLDMCGFDTGALDVIRNFTLDMI.

Met1 is subject to N-acetylmethionine. 2 positions are modified to phosphoserine: Ser4 and Ser19. In terms of domain architecture, TROVE spans 16–369 (IANSQDGYVW…TFKTVEPTGK (354 aa)). The tract at residues 120 to 284 (RIPTHLFTFI…EMPLTALLRN (165 aa)) is RNA-binding. N6-acetyllysine is present on residues Lys224 and Lys359. A VWFA-like domain region spans residues 361-538 (FKTVEPTGKR…VIRNFTLDMI (178 aa)). A divalent metal cation contacts are provided by Ser378, Ser380, and Thr445.

The protein belongs to the Ro 60 kDa family. Identified in a IGF2BP1-dependent mRNP granule complex containing untranslated mRNAs. Found in a complex with PUF60 and Y5 RNA. Interacts with RAB11FIP5.

It is found in the cytoplasm. In terms of biological role, RNA-binding protein that binds to misfolded non-coding RNAs, pre-5S rRNA, and several small cytoplasmic RNA molecules known as Y RNAs. Binds to endogenous Alu retroelements which are induced by type I interferon and stimulate porinflammatory cytokine secretion. Regulates the expression of Alu retroelements as well as inflammatory genes. May play roles in cilia formation and/or maintenance. The sequence is that of RNA-binding protein RO60 from Homo sapiens (Human).